The primary structure comprises 407 residues: Na(+)-translocating NADH-quinone reductase subunit F (407 aa).

Residues Ile-6–Val-26 form a helical membrane-spanning segment. The region spanning Gly-35–Val-127 is the 2Fe-2S ferredoxin-type domain. Positions 70, 76, 79, and 111 each coordinate [2Fe-2S] cluster. The 140-residue stretch at Val-130 to Lys-269 folds into the FAD-binding FR-type domain.

Belongs to the NqrF family. In terms of assembly, composed of six subunits; NqrA, NqrB, NqrC, NqrD, NqrE and NqrF. [2Fe-2S] cluster is required as a cofactor. Requires FAD as cofactor.

The protein resides in the cell inner membrane. It catalyses the reaction a ubiquinone + n Na(+)(in) + NADH + H(+) = a ubiquinol + n Na(+)(out) + NAD(+). In terms of biological role, NQR complex catalyzes the reduction of ubiquinone-1 to ubiquinol by two successive reactions, coupled with the transport of Na(+) ions from the cytoplasm to the periplasm. The first step is catalyzed by NqrF, which accepts electrons from NADH and reduces ubiquinone-1 to ubisemiquinone by a one-electron transfer pathway. This Pseudomonas paraeruginosa (strain DSM 24068 / PA7) (Pseudomonas aeruginosa (strain PA7)) protein is Na(+)-translocating NADH-quinone reductase subunit F.